The primary structure comprises 844 residues: Rho guanine nucleotide exchange factor 33 (844 aa).

2 stretches are compositionally biased toward basic and acidic residues: residues 1–13 (MEKT…ENEH) and 101–113 (QQKI…EKRR). 3 disordered regions span residues 1-20 (MEKT…NNPS), 101-142 (QQKI…GSPF), and 169-189 (AQES…MGPG). Residues 54 to 129 (LEEKVKSCRC…AKKTQKEEHS (76 aa)) are a coiled coil. Over residues 130–142 (SQAGPAQAQGSPF) the composition is skewed to polar residues. The 176-residue stretch at 265-440 (KRQTVALELL…RVFISHYTLL (176 aa)) folds into the DH domain. 3 disordered regions span residues 498-541 (LQPY…DWEL), 668-687 (RPEH…AGSS), and 702-745 (AKPL…RAAQ). At Arg757 the chain carries Omega-N-methylarginine. Residues 787–800 (DTTRFCPKEERESE) are compositionally biased toward basic and acidic residues. Positions 787-844 (DTTRFCPKEERESEQTSFSDQNPRQDQKGGFRSSFRKLFKKKNGNATGEDFCGPWGWW) are disordered. Over residues 820-829 (SFRKLFKKKN) the composition is skewed to basic residues.

Its function is as follows. May act as a guanine-nucleotide releasing factor. The sequence is that of Rho guanine nucleotide exchange factor 33 (ARHGEF33) from Homo sapiens (Human).